Consider the following 145-residue polypeptide: 3-hydroxyacyl-[acyl-carrier-protein] dehydratase FabZ (145 aa).

Residue His-47 is part of the active site.

This sequence belongs to the thioester dehydratase family. FabZ subfamily.

The protein localises to the cytoplasm. The catalysed reaction is a (3R)-hydroxyacyl-[ACP] = a (2E)-enoyl-[ACP] + H2O. Involved in unsaturated fatty acids biosynthesis. Catalyzes the dehydration of short chain beta-hydroxyacyl-ACPs and long chain saturated and unsaturated beta-hydroxyacyl-ACPs. This is 3-hydroxyacyl-[acyl-carrier-protein] dehydratase FabZ from Vesicomyosocius okutanii subsp. Calyptogena okutanii (strain HA).